The primary structure comprises 355 residues: MKLEVNLKQNPYDIIIEKGALKGVGQWVKSLWEPQKIALITDNHVRGLYAEKVKLSLENEGFEVVVFDFLEGEASKNLKTVNKAYEFLIKNGMTRSDGIVALGGGVVGDLAGFVASTYMRGIHFVQVPTSLTAQVDSSIGGKTGVNTPFAKNIVGTFAQPDGVLIDPNVLKTLGKRELIEGMGEVVKYGLIDDPELWQLLDNIDGSVHSILENSETIIYRSCNVKRKIVVEDEFEGGVRMYLNFGHTIGHAVEQTAGYGKVMHGEAVAIGMVQISRVAEKKKLMPQGITRQIAEMCVKFGLPVDYEPWRVEELYTALTHDKKARGNSIKTVIVPEIGKAAINQIPLIEMKEYLEK.

Residues 71-76 (EGEASK), 105-109 (GVVGD), 129-130 (TS), lysine 142, and lysine 151 each bind NAD(+). Zn(2+) contacts are provided by glutamate 184, histidine 246, and histidine 263.

Belongs to the sugar phosphate cyclases superfamily. Dehydroquinate synthase family. Requires Co(2+) as cofactor. The cofactor is Zn(2+). NAD(+) is required as a cofactor.

It is found in the cytoplasm. It carries out the reaction 7-phospho-2-dehydro-3-deoxy-D-arabino-heptonate = 3-dehydroquinate + phosphate. The protein operates within metabolic intermediate biosynthesis; chorismate biosynthesis; chorismate from D-erythrose 4-phosphate and phosphoenolpyruvate: step 2/7. Its function is as follows. Catalyzes the conversion of 3-deoxy-D-arabino-heptulosonate 7-phosphate (DAHP) to dehydroquinate (DHQ). This chain is 3-dehydroquinate synthase, found in Streptococcus thermophilus (strain CNRZ 1066).